Consider the following 392-residue polypeptide: Cellobiose 2-epimerase (392 aa).

Belongs to the cellobiose 2-epimerase family.

It catalyses the reaction D-cellobiose = beta-D-glucosyl-(1-&gt;4)-D-mannopyranose. Its function is as follows. Catalyzes the reversible epimerization of cellobiose to 4-O-beta-D-glucopyranosyl-D-mannose (Glc-Man). Can also epimerize cellotriose to Glc-Glc-Man, cellotetraose to Glc-Glc-Glc-Man, lactose to epilactose, and mannobiose to 4-O-beta-D-mannopyranosyl-D-glucopyranose (Man-Glc). May function as a mannobiose 2-epimerase in vivo and be involved in a mannan catabolic pathway which feeds into glycolysis. This is Cellobiose 2-epimerase (bfce) from Bacteroides fragilis (strain ATCC 25285 / DSM 2151 / CCUG 4856 / JCM 11019 / LMG 10263 / NCTC 9343 / Onslow / VPI 2553 / EN-2).